The chain runs to 152 residues: 3-dehydroquinate dehydratase (152 aa).

Tyr-25 acts as the Proton acceptor in catalysis. Substrate-binding residues include Asn-76, His-82, and Asp-89. His-102 (proton donor) is an active-site residue. Substrate contacts are provided by residues 103 to 104 and Arg-113; that span reads LS.

It belongs to the type-II 3-dehydroquinase family. In terms of assembly, homododecamer.

It catalyses the reaction 3-dehydroquinate = 3-dehydroshikimate + H2O. It participates in metabolic intermediate biosynthesis; chorismate biosynthesis; chorismate from D-erythrose 4-phosphate and phosphoenolpyruvate: step 3/7. Its function is as follows. Catalyzes a trans-dehydration via an enolate intermediate. The protein is 3-dehydroquinate dehydratase of Gloeothece citriformis (strain PCC 7424) (Cyanothece sp. (strain PCC 7424)).